Reading from the N-terminus, the 1291-residue chain is Capping protein-inhibiting regulator of actin dynamics (1291 aa).

Phosphoserine is present on residues S7 and S28. Disordered regions lie at residues 48 to 71 (KFGQ…SSEE), 84 to 137 (QQDI…AGTI), 159 to 221 (HKLA…HEEK), 234 to 253 (KCKR…EQRR), 267 to 663 (QELL…ASHA), and 701 to 1238 (LGLS…TSVT). Phosphoserine is present on S132. Residues 159–176 (HKLAVKPKNQRVSRKHRW) show a composition bias toward basic residues. Residues 184 to 199 (EPGSFESQSSLDQNGQ) are compositionally biased toward polar residues. Over residues 201 to 221 (GEDKHIWHGEEPEPLESHEEK) the composition is skewed to basic and acidic residues. The span at 270–291 (LEEEEEGEEEEEVKEEGEEGEE) shows a compositional bias: acidic residues. Composition is skewed to basic and acidic residues over residues 302–318 (PPEE…RCTE), 326–461 (DPAR…EDAK), and 470–483 (EAKR…KETP). A required for interaction with actin-capping proteins region spans residues 324-560 (ADDPARLEAE…DLDAHCGGVD (237 aa)). Residue T482 is modified to Phosphothreonine. Phosphoserine is present on residues S493 and S510. Composition is skewed to basic and acidic residues over residues 506–527 (ADQR…REDL) and 534–543 (EIAEEPRGEG). Residues 580-593 (EGTPAPEENEATAA) show a composition bias toward low complexity. A compositionally biased stretch (basic and acidic residues) spans 594-612 (DIDRKVEELRWQEVDERQT). At S636 the chain carries Phosphoserine. T639 bears the Phosphothreonine mark. Residues 749 to 778 (KNSEGDQRGDREPARAGDEPVPRARCDSRG) show a composition bias toward basic and acidic residues. Residue S867 is modified to Phosphoserine. Low complexity predominate over residues 875 to 888 (TESTTTLDSETTSD). Over residues 969 to 983 (QERKPALSPRKDSAE) the composition is skewed to basic and acidic residues. At T1033 the chain carries Phosphothreonine. S1037 carries the phosphoserine modification. Positions 1056–1070 (GKLDSEPSETAKESS) are enriched in basic and acidic residues. At S1076 the chain carries Phosphoserine. Basic and acidic residues-rich tracts occupy residues 1081 to 1098 (EELK…EKKP), 1117 to 1141 (TGRK…EKVE), and 1157 to 1182 (GFRE…KLSK). Composition is skewed to polar residues over residues 1183-1197 (ETVS…SRAS) and 1229-1238 (KSNTLPTSVT).

In terms of assembly, directly interacts with actin-capping proteins CAPZA1, CAPZA2 and CAPZB; this interaction decreases the binding of capping proteins to actin. In terms of tissue distribution, expressed in the small intestine (at protein level).

The protein localises to the cytoplasm. It localises to the cytosol. Involved in epithelial cell integrity by acting on the dynamics of the actin cytoskeleton. Positively regulates the actin polymerization, by inhibiting the interaction of actin-capping proteins with actin. In Mus musculus (Mouse), this protein is Capping protein-inhibiting regulator of actin dynamics.